Here is a 73-residue protein sequence, read N- to C-terminus: Putative membrane protein insertion efficiency factor (73 aa).

Belongs to the UPF0161 family.

It localises to the cell inner membrane. In terms of biological role, could be involved in insertion of integral membrane proteins into the membrane. In Dinoroseobacter shibae (strain DSM 16493 / NCIMB 14021 / DFL 12), this protein is Putative membrane protein insertion efficiency factor.